Reading from the N-terminus, the 112-residue chain is MNTKGKVYEDKAVSFFLNRDYRIIARNFSYRHGEIDIIALKNKILHLIEVKGGKETFGDPAFRVNSRKLKKIMKVGNYFIATHPKLEFDEIQIDVISVTNDGVINYYPAQRL.

Belongs to the UPF0102 family.

In Petrotoga mobilis (strain DSM 10674 / SJ95), this protein is UPF0102 protein Pmob_0702.